Here is a 199-residue protein sequence, read N- to C-terminus: 3-isopropylmalate dehydratase small subunit (199 aa).

Belongs to the LeuD family. LeuD type 1 subfamily. In terms of assembly, heterodimer of LeuC and LeuD.

The catalysed reaction is (2R,3S)-3-isopropylmalate = (2S)-2-isopropylmalate. Its pathway is amino-acid biosynthesis; L-leucine biosynthesis; L-leucine from 3-methyl-2-oxobutanoate: step 2/4. In terms of biological role, catalyzes the isomerization between 2-isopropylmalate and 3-isopropylmalate, via the formation of 2-isopropylmaleate. The chain is 3-isopropylmalate dehydratase small subunit from Pseudoalteromonas translucida (strain TAC 125).